The primary structure comprises 919 residues: Isoleucine--tRNA ligase (919 aa).

The 'HIGH' region signature appears at 57–67 (PYANGHIHIGT). Glu553 contributes to the L-isoleucyl-5'-AMP binding site. A 'KMSKS' region motif is present at residues 594–598 (KMSKS). Position 597 (Lys597) interacts with ATP. The Zn(2+) site is built by Cys887, Cys890, Cys907, and Cys910.

Belongs to the class-I aminoacyl-tRNA synthetase family. IleS type 1 subfamily. As to quaternary structure, monomer. Zn(2+) serves as cofactor.

It is found in the cytoplasm. The enzyme catalyses tRNA(Ile) + L-isoleucine + ATP = L-isoleucyl-tRNA(Ile) + AMP + diphosphate. In terms of biological role, catalyzes the attachment of isoleucine to tRNA(Ile). As IleRS can inadvertently accommodate and process structurally similar amino acids such as valine, to avoid such errors it has two additional distinct tRNA(Ile)-dependent editing activities. One activity is designated as 'pretransfer' editing and involves the hydrolysis of activated Val-AMP. The other activity is designated 'posttransfer' editing and involves deacylation of mischarged Val-tRNA(Ile). The sequence is that of Isoleucine--tRNA ligase from Thermotoga maritima (strain ATCC 43589 / DSM 3109 / JCM 10099 / NBRC 100826 / MSB8).